Here is a 467-residue protein sequence, read N- to C-terminus: Protein arginine methyltransferase NDUFAF7 homolog, mitochondrial (467 aa).

The protein belongs to the NDUFAF7 family.

Its subcellular location is the mitochondrion. The catalysed reaction is L-arginyl-[protein] + 2 S-adenosyl-L-methionine = N(omega),N(omega)'-dimethyl-L-arginyl-[protein] + 2 S-adenosyl-L-homocysteine + 2 H(+). Functionally, arginine methyltransferase involved in the assembly or stability of mitochondrial NADH:ubiquinone oxidoreductase complex (complex I). The sequence is that of Protein arginine methyltransferase NDUFAF7 homolog, mitochondrial from Schizosaccharomyces pombe (strain 972 / ATCC 24843) (Fission yeast).